A 489-amino-acid polypeptide reads, in one-letter code: Cytochrome P450 monooxygenase prhB (489 aa).

A run of 3 helical transmembrane segments spans residues 1-21 (MFSFGFLITAVVFWVVTKVIY), 212-232 (VIFQCLGFFPWIKEPLVMIFA), and 287-307 (LFIGAGAESTATLLMGVAYLL). 2 N-linked (GlcNAc...) asparagine glycosylation sites follow: Asn347 and Asn379. Cys431 contacts heme.

The protein belongs to the cytochrome P450 family. The cofactor is heme.

The protein localises to the membrane. It participates in secondary metabolite biosynthesis; terpenoid biosynthesis. Cytochrome P450 monooxygenase; part of the gene cluster that mediates the biosynthesis of paraherquonin, a meroterpenoid with a unique, highly congested hexacyclic molecular architecture. The first step of the pathway is the synthesis of 3,5-dimethylorsellinic acid (DMOA) by the polyketide synthase prhL. Synthesis of DMOA is followed by farnesylation by the prenyltransferase prhE, methylesterification by the methyl-transferase prhM, epoxidation of the prenyl chain by the flavin-dependent monooxygenase prhF, and cyclization of the farnesyl moiety by the terpene cyclase prhH, to yield the tetracyclic intermediate, protoaustinoid A. The short chain dehydrogenase prhI then oxidizes the C-3 alcohol group of the terpene cyclase product to transform protoaustinoid A into protoaustinoid B. The FAD-binding monooxygenase prhJ catalyzes the oxidation of protoaustinoid B into preaustinoid A which is further oxidized into preaustinoid A1 by FAD-binding monooxygenase phrK. Finally, prhA leads to berkeleydione via the berkeleyone B intermediate. PrhA is a multifunctional dioxygenase that first desaturates at C5-C6 to form berkeleyone B, followed by rearrangement of the A/B-ring to form the cycloheptadiene moiety in berkeleydione. Berkeleydione serves as the key intermediate for the biosynthesis of paraherquonin as well as many other meroterpenoids. The cytochrome P450 monooxygenases prhB, prhD, and prhN, as well as the isomerase prhC, are probably involved in the late stage of paraherquonin biosynthesis, after the production of berkeleydione. Especially prhC might be a multifunctional enzyme that catalyzes the D-ring expansion via intramolecular methoxy rearrangement, as well as the hydrolysis of the expanded D-ring. The protein is Cytochrome P450 monooxygenase prhB of Penicillium brasilianum.